The chain runs to 336 residues: Fructose-1,6-bisphosphatase class 1 (336 aa).

Mg(2+) is bound by residues glutamate 91, aspartate 114, leucine 116, and aspartate 117. Residues 117 to 120, asparagine 210, tyrosine 243, and lysine 273 contribute to the substrate site; that span reads DGSS. Glutamate 279 contacts Mg(2+).

The protein belongs to the FBPase class 1 family. As to quaternary structure, homotetramer. Requires Mg(2+) as cofactor.

The protein localises to the cytoplasm. It catalyses the reaction beta-D-fructose 1,6-bisphosphate + H2O = beta-D-fructose 6-phosphate + phosphate. The protein operates within carbohydrate biosynthesis; gluconeogenesis. The protein is Fructose-1,6-bisphosphatase class 1 of Dichelobacter nodosus (strain VCS1703A).